Consider the following 389-residue polypeptide: Methionyl-tRNA formyltransferase, mitochondrial (389 aa).

This sequence belongs to the Fmt family.

The protein localises to the mitochondrion. It carries out the reaction L-methionyl-tRNA(fMet) + (6R)-10-formyltetrahydrofolate = N-formyl-L-methionyl-tRNA(fMet) + (6S)-5,6,7,8-tetrahydrofolate + H(+). Methionyl-tRNA formyltransferase that formylates methionyl-tRNA in mitochondria and is crucial for translation initiation. The polypeptide is Methionyl-tRNA formyltransferase, mitochondrial (MTFMT) (Homo sapiens (Human)).